The chain runs to 153 residues: Endoribonuclease YbeY (153 aa).

Positions 114, 118, and 124 each coordinate Zn(2+).

Belongs to the endoribonuclease YbeY family. The cofactor is Zn(2+).

It is found in the cytoplasm. In terms of biological role, single strand-specific metallo-endoribonuclease involved in late-stage 70S ribosome quality control and in maturation of the 3' terminus of the 16S rRNA. The polypeptide is Endoribonuclease YbeY (Shewanella amazonensis (strain ATCC BAA-1098 / SB2B)).